Here is a 437-residue protein sequence, read N- to C-terminus: La-related protein 7 homolog (437 aa).

Residues 38 to 145 (SKSPSLTIPK…KRKKKFDNRT (108 aa)) enclose the HTH La-type RNA-binding domain. Residues 279–397 (ELSQSCFLKI…QRSSIDEIKA (119 aa)) form the xRRM domain. The segment covering 417-427 (RRPVSKRKNKA) has biased composition (basic residues). Residues 417–437 (RRPVSKRKNKAINKMSTEVKK) are disordered.

Belongs to the LARP7 family. As to quaternary structure, component of the telomerase holoenzyme complex composed minimally of the catalytic subunit p123 and the telomerase RNA template component. The mature form of the protein is a protein of 43 kDa, which is derived from a 51 kDa precursor by proteolytic cleavage.

It localises to the nucleus. The protein resides in the chromosome. It is found in the telomere. In terms of biological role, RNA-binding protein required for assembly of the holoenzyme telomerase ribonucleoprotein (RNP) complex. Specifically binds telomerase RNA and promotes its assembly with catalytic subunit p123, thereby stimulating enzymatic activity and processivity of p123. Telomerase is a ribonucleoprotein enzyme essential that copies new telomeric repeats onto chromosome ends and functions to maintain cell division. The protein is La-related protein 7 homolog of Euplotes aediculatus (Ciliate).